A 147-amino-acid chain; its full sequence is Cytochrome c-type biogenesis protein CcmE (147 aa).

Over 1 to 9 (MKNLKKQRR) the chain is Cytoplasmic. The helical; Signal-anchor for type II membrane protein transmembrane segment at 10–30 (IQVIALATVALVLSTALIGYA) threads the bilayer. The Periplasmic portion of the chain corresponds to 31 to 147 (MRDGINFFRA…EQGVYKGTEG (117 aa)). Heme is bound by residues H123 and Y127.

The protein belongs to the CcmE/CycJ family.

The protein resides in the cell inner membrane. Functionally, heme chaperone required for the biogenesis of c-type cytochromes. Transiently binds heme delivered by CcmC and transfers the heme to apo-cytochromes in a process facilitated by CcmF and CcmH. This is Cytochrome c-type biogenesis protein CcmE from Roseobacter denitrificans (strain ATCC 33942 / OCh 114) (Erythrobacter sp. (strain OCh 114)).